Consider the following 206-residue polypeptide: MAVRSKSSKAWLHEHINDHYVHMAQKDGYRARAAYKLLEINEKDKIIKPGTVLADLGSAPGSWSQVAAKLTGTSGTVFALDILPMEAIGGVSFIQGDFRENDVLAQFETLLDNRPLDLVICDMAPNMSGNAVSDQARSFYLCELALDFASQHLKTGGSFLVKVFQGAGYQEYMAAMREIFGTVQTRKPEASRNRSSEIYLLGKNKR.

S-adenosyl-L-methionine-binding residues include G61, W63, D81, D97, and D122. K162 functions as the Proton acceptor in the catalytic mechanism.

This sequence belongs to the class I-like SAM-binding methyltransferase superfamily. RNA methyltransferase RlmE family.

It is found in the cytoplasm. It catalyses the reaction uridine(2552) in 23S rRNA + S-adenosyl-L-methionine = 2'-O-methyluridine(2552) in 23S rRNA + S-adenosyl-L-homocysteine + H(+). Its function is as follows. Specifically methylates the uridine in position 2552 of 23S rRNA at the 2'-O position of the ribose in the fully assembled 50S ribosomal subunit. The sequence is that of Ribosomal RNA large subunit methyltransferase E from Neisseria gonorrhoeae (strain NCCP11945).